The following is a 284-amino-acid chain: uncharacterized protein (284 aa).

The chain crosses the membrane as a helical span at residues 12–32; sequence ILFILFVVAFCVYLVPRVAIN.

It belongs to the serine esterase family.

The protein resides in the membrane. This is an uncharacterized protein from Escherichia coli (strain K12).